A 1380-amino-acid chain; its full sequence is DNA-directed RNA polymerase subunit beta (1380 aa).

Belongs to the RNA polymerase beta chain family. As to quaternary structure, the RNAP catalytic core consists of 2 alpha, 1 beta, 1 beta' and 1 omega subunit. When a sigma factor is associated with the core the holoenzyme is formed, which can initiate transcription.

It carries out the reaction RNA(n) + a ribonucleoside 5'-triphosphate = RNA(n+1) + diphosphate. In terms of biological role, DNA-dependent RNA polymerase catalyzes the transcription of DNA into RNA using the four ribonucleoside triphosphates as substrates. This is DNA-directed RNA polymerase subunit beta from Ehrlichia canis (strain Jake).